We begin with the raw amino-acid sequence, 344 residues long: uncharacterized protein (344 aa).

The N-terminal stretch at 1 to 19 (MRIIFYLTLLLFIFNKVKS) is a signal peptide. The propeptide at 323-344 (SATRNQISIMVLILSVLLVLIL) is removed in mature form.

The protein localises to the cell membrane. This is an uncharacterized protein from Dictyostelium discoideum (Social amoeba).